Reading from the N-terminus, the 306-residue chain is Glutamyl-Q tRNA(Asp) synthetase (306 aa).

L-glutamate is bound by residues 29–33 (RFAPS) and Asp-65. The 'HIGH' region motif lies at 32–42 (PSPTGPLHLGN). Positions 121, 123, 141, and 145 each coordinate Zn(2+). 2 residues coordinate L-glutamate: Tyr-188 and Arg-206. The 'KMSKS' region motif lies at 244-248 (KLAKR). Lys-247 lines the ATP pocket.

This sequence belongs to the class-I aminoacyl-tRNA synthetase family. GluQ subfamily. Zn(2+) serves as cofactor.

Catalyzes the tRNA-independent activation of glutamate in presence of ATP and the subsequent transfer of glutamate onto a tRNA(Asp). Glutamate is transferred on the 2-amino-5-(4,5-dihydroxy-2-cyclopenten-1-yl) moiety of the queuosine in the wobble position of the QUC anticodon. This Prochlorococcus marinus (strain MIT 9313) protein is Glutamyl-Q tRNA(Asp) synthetase.